The following is a 184-amino-acid chain: Holliday junction branch migration complex subunit RuvA (184 aa).

Positions 1 to 61 (MIAALRGNIF…ENEYTLYGFA (61 aa)) are domain I. Residues 62–135 (DKNEKKLFDS…GEFEVVFEEQ (74 aa)) are domain II. Position 135 (Gln135) is a region of interest, flexible linker. The interval 135–184 (QNPVFNQALSALESLGFNKNDIVKALNGIKSDNLEETIKLALKKLSKDIK) is domain III.

The protein belongs to the RuvA family. In terms of assembly, homotetramer. Forms an RuvA(8)-RuvB(12)-Holliday junction (HJ) complex. HJ DNA is sandwiched between 2 RuvA tetramers; dsDNA enters through RuvA and exits via RuvB. An RuvB hexamer assembles on each DNA strand where it exits the tetramer. Each RuvB hexamer is contacted by two RuvA subunits (via domain III) on 2 adjacent RuvB subunits; this complex drives branch migration. In the full resolvosome a probable DNA-RuvA(4)-RuvB(12)-RuvC(2) complex forms which resolves the HJ.

It localises to the cytoplasm. Its function is as follows. The RuvA-RuvB-RuvC complex processes Holliday junction (HJ) DNA during genetic recombination and DNA repair, while the RuvA-RuvB complex plays an important role in the rescue of blocked DNA replication forks via replication fork reversal (RFR). RuvA specifically binds to HJ cruciform DNA, conferring on it an open structure. The RuvB hexamer acts as an ATP-dependent pump, pulling dsDNA into and through the RuvAB complex. HJ branch migration allows RuvC to scan DNA until it finds its consensus sequence, where it cleaves and resolves the cruciform DNA. This chain is Holliday junction branch migration complex subunit RuvA, found in Nautilia profundicola (strain ATCC BAA-1463 / DSM 18972 / AmH).